We begin with the raw amino-acid sequence, 113 residues long: uncharacterized protein (113 aa).

Belongs to the ycf68 family.

Its subcellular location is the plastid. It localises to the chloroplast. This is an uncharacterized protein from Eucalyptus globulus subsp. globulus (Tasmanian blue gum).